A 149-amino-acid polypeptide reads, in one-letter code: Large ribosomal subunit protein bL9 (149 aa).

Belongs to the bacterial ribosomal protein bL9 family.

Functionally, binds to the 23S rRNA. The chain is Large ribosomal subunit protein bL9 from Desulforamulus reducens (strain ATCC BAA-1160 / DSM 100696 / MI-1) (Desulfotomaculum reducens).